A 101-amino-acid polypeptide reads, in one-letter code: uncharacterized protein (101 aa).

A signal peptide spans 1–23; the sequence is MERRTGVVLIIFVTFCEAMMARA. The helical transmembrane segment at 38-58 threads the bilayer; that stretch reads FLLFIIHTSCTMVAFIIGNLA.

The protein localises to the host membrane. This is an uncharacterized protein from Cryphonectria parasitica (Chestnut blight fungus).